Reading from the N-terminus, the 471-residue chain is Glutamate--tRNA ligase (471 aa).

A 'HIGH' region motif is present at residues 9 to 19 (PSPTGYLHVGG). Zn(2+) contacts are provided by cysteine 98, cysteine 100, cysteine 125, and histidine 127. The short motif at 237–241 (KLSKR) is the 'KMSKS' region element. Residue lysine 240 coordinates ATP.

This sequence belongs to the class-I aminoacyl-tRNA synthetase family. Glutamate--tRNA ligase type 1 subfamily. In terms of assembly, monomer. Zn(2+) serves as cofactor.

It is found in the cytoplasm. It catalyses the reaction tRNA(Glu) + L-glutamate + ATP = L-glutamyl-tRNA(Glu) + AMP + diphosphate. In terms of biological role, catalyzes the attachment of glutamate to tRNA(Glu) in a two-step reaction: glutamate is first activated by ATP to form Glu-AMP and then transferred to the acceptor end of tRNA(Glu). The protein is Glutamate--tRNA ligase of Escherichia coli O157:H7.